The sequence spans 30 residues: ASEALVEIKPGEIGMVSGIPDEHLRRFVVI.

In terms of assembly, complex I is composed of about 45 different subunits.

The protein localises to the mitochondrion inner membrane. It carries out the reaction a ubiquinone + NADH + 5 H(+)(in) = a ubiquinol + NAD(+) + 4 H(+)(out). Functionally, transfer of electrons from NADH to the respiratory chain. The immediate electron acceptor for the enzyme is believed to be ubiquinone. This is NADH-ubiquinone oxidoreductase 18 kDa subunit from Solanum tuberosum (Potato).